We begin with the raw amino-acid sequence, 657 residues long: Glycogen debranching enzyme (657 aa).

Asp-336 serves as the catalytic Nucleophile. The Proton donor role is filled by Glu-371. A disordered region spans residues 460–479 (ANGEENRDGTNNNYSNNHGK).

It belongs to the glycosyl hydrolase 13 family.

It catalyses the reaction Hydrolysis of (1-&gt;6)-alpha-D-glucosidic linkages to branches with degrees of polymerization of three or four glucose residues in limit dextrin.. It participates in glycan degradation; glycogen degradation. In terms of biological role, removes maltotriose and maltotetraose chains that are attached by 1,6-alpha-linkage to the limit dextrin main chain, generating a debranched limit dextrin. The protein is Glycogen debranching enzyme of Escherichia coli O1:K1 / APEC.